The following is a 434-amino-acid chain: Tol-Pal system protein TolB (434 aa).

Positions 1 to 28 are cleaved as a signal peptide; it reads MMNTRVWCKIIGMLALLVWLVSSPSVFA.

This sequence belongs to the TolB family. The Tol-Pal system is composed of five core proteins: the inner membrane proteins TolA, TolQ and TolR, the periplasmic protein TolB and the outer membrane protein Pal. They form a network linking the inner and outer membranes and the peptidoglycan layer.

The protein resides in the periplasm. Part of the Tol-Pal system, which plays a role in outer membrane invagination during cell division and is important for maintaining outer membrane integrity. In Nitrosococcus oceani (strain ATCC 19707 / BCRC 17464 / JCM 30415 / NCIMB 11848 / C-107), this protein is Tol-Pal system protein TolB.